We begin with the raw amino-acid sequence, 229 residues long: Peptidase E (229 aa).

Active-site charge relay system residues include S120, D135, and H157.

This sequence belongs to the peptidase S51 family.

The protein resides in the cytoplasm. It catalyses the reaction Dipeptidase E catalyzes the hydrolysis of dipeptides Asp-|-Xaa. It does not act on peptides with N-terminal Glu, Asn or Gln, nor does it cleave isoaspartyl peptides.. Its function is as follows. Hydrolyzes dipeptides containing N-terminal aspartate residues. May play a role in allowing the cell to use peptide aspartate to spare carbon otherwise required for the synthesis of the aspartate family of amino acids. The polypeptide is Peptidase E (Shigella flexneri serotype 5b (strain 8401)).